A 485-amino-acid chain; its full sequence is Cysteine--tRNA ligase (485 aa).

Cys-27 is a binding site for Zn(2+). The short motif at 29-39 (ITAYDLCHIGH) is the 'HIGH' region element. Residues Cys-208, His-233, and Glu-237 each contribute to the Zn(2+) site. The 'KMSKS' region motif lies at 265–269 (KMSKS). Position 268 (Lys-268) interacts with ATP.

Belongs to the class-I aminoacyl-tRNA synthetase family. As to quaternary structure, monomer. Requires Zn(2+) as cofactor.

The protein resides in the cytoplasm. The catalysed reaction is tRNA(Cys) + L-cysteine + ATP = L-cysteinyl-tRNA(Cys) + AMP + diphosphate. This chain is Cysteine--tRNA ligase, found in Nitratidesulfovibrio vulgaris (strain ATCC 29579 / DSM 644 / CCUG 34227 / NCIMB 8303 / VKM B-1760 / Hildenborough) (Desulfovibrio vulgaris).